A 1981-amino-acid chain; its full sequence is Nonribosomal peptide synthetase rstn8 (1981 aa).

Positions 251-638 (SYAALEQESA…ELGEIEYQAS (388 aa)) are adenylation. Positions 763–840 (HHAGQKYDEM…ELFHRSQKTP (78 aa)) constitute a Carrier 1 domain. At serine 800 the chain carries O-(pantetheine 4'-phosphoryl)serine. The interval 883 to 1293 (EDIYPCSPLQ…DASMGTILSQ (411 aa)) is condensation 1. One can recognise a Carrier 2 domain in the interval 1438–1514 (EPLLPLEATL…CLASTLNSRP (77 aa)). Residue serine 1475 is modified to O-(pantetheine 4'-phosphoryl)serine. The condensation 1 stretch occupies residues 1586 to 1978 (EEQIDLVSFA…TFAQSIERII (393 aa)). A disordered region spans residues 1754 to 1774 (HHHHQHEGRQHHGASETNGNR).

Belongs to the NRP synthetase family. Requires pantetheine 4'-phosphate as cofactor.

The enzyme catalyses 2 L-tryptophan = cyclo(L-Trp-L-Trp) + 2 H2O. The protein operates within alkaloid biosynthesis. Its function is as follows. Nonribosomal peptide synthetase; part of the gene cluster that mediates the biosynthesis of okaramine B, a prenylated indole alkaloid that possesses an unusual octacyclic ring system, including a four-membered azetidine ring and an eight-membered azocine ring, and that exhibits insecticidal activity against silkworm larvae. Within the pathway, okaA acts as a bimodular non-ribosomal peptide synthetase (NRPS) that condenses two tryptophan molecules into cyclo(L-Trp-L-Trp). Prenylation by the prenyltransferase okaC then leads to the formation of cyclo(N8-(alpha,alpha-dimethylallyl)-L-Trp-6a-(alpha,alpha-dime-thylallyl)-L-Trp). This is followed by indole 2,3-epoxidation by the FAD-dependent monooxygenase okaB to facilitate the formation of the hexahydropyrrolo[2,3-b]indole (HPI) moiety of okaramine C. The cytochrome P450 monooxygenase okaD then likely catalyzes formation of the eight-membered ring of okaramine A. The dioxygenase okaE further forms the unusual 2-dimethyl-3-methyl-azetidine ring to yield 12-deshydroxyl okaramine E, as well as the hydroxylation of 12-deshydroxyl okaramine E to produce okaramine E. The cytochrome P450 monoxygenase okaG converts 12-deshydroxyl okaramine E into 3-desmethyl okaramine B which is further methylated by the methyltransferase okaF into okaramine B. In a shunt pathway, okaG and okaF together are also able to convert okaramine E into okaramine D. Okaramine H is produced by nonenzymatic conversion from okaramine A. In Penicillium ochrochloron, this protein is Nonribosomal peptide synthetase rstn8.